A 356-amino-acid polypeptide reads, in one-letter code: 3,4-dihydroxy-2-butanone 4-phosphate synthase (356 aa).

Residues 1–211 (MNAILSDQKT…ISDIVEYRMM (211 aa)) are DHBP synthase. Residues 38-39 (RE), D43, 150-154 (RIGHT), and E174 contribute to the D-ribulose 5-phosphate site. E39 contributes to the Mg(2+) binding site. H153 is a Mg(2+) binding site. The interval 212–356 (NESLIRVIAE…KSTNVNETVA (145 aa)) is GTP cyclohydrolase II-like.

This sequence in the N-terminal section; belongs to the DHBP synthase family. In the C-terminal section; belongs to the GTP cyclohydrolase II family. Mg(2+) is required as a cofactor. The cofactor is Mn(2+).

The enzyme catalyses D-ribulose 5-phosphate = (2S)-2-hydroxy-3-oxobutyl phosphate + formate + H(+). It functions in the pathway cofactor biosynthesis; riboflavin biosynthesis; 2-hydroxy-3-oxobutyl phosphate from D-ribulose 5-phosphate: step 1/1. In terms of biological role, catalyzes the conversion of D-ribulose 5-phosphate to formate and 3,4-dihydroxy-2-butanone 4-phosphate. In Sulfurospirillum multivorans (Dehalospirillum multivorans), this protein is 3,4-dihydroxy-2-butanone 4-phosphate synthase (ribB).